The chain runs to 385 residues: Lipoyl synthase, mitochondrial (385 aa).

Residues 18–40 form a disordered region; the sequence is TKAKNRTFSSSTVESSTKQPPQF. [4Fe-4S] cluster is bound by residues cysteine 113, cysteine 118, cysteine 124, cysteine 144, cysteine 148, cysteine 151, and serine 360. The region spanning 129-349 is the Radical SAM core domain; sequence ETGTATATIM…KTLGMEMGFR (221 aa).

This sequence belongs to the radical SAM superfamily. Lipoyl synthase family. Requires [4Fe-4S] cluster as cofactor.

The protein resides in the mitochondrion. The catalysed reaction is [[Fe-S] cluster scaffold protein carrying a second [4Fe-4S](2+) cluster] + N(6)-octanoyl-L-lysyl-[protein] + 2 oxidized [2Fe-2S]-[ferredoxin] + 2 S-adenosyl-L-methionine + 4 H(+) = [[Fe-S] cluster scaffold protein] + N(6)-[(R)-dihydrolipoyl]-L-lysyl-[protein] + 4 Fe(3+) + 2 hydrogen sulfide + 2 5'-deoxyadenosine + 2 L-methionine + 2 reduced [2Fe-2S]-[ferredoxin]. Its pathway is protein modification; protein lipoylation via endogenous pathway; protein N(6)-(lipoyl)lysine from octanoyl-[acyl-carrier-protein]: step 2/2. Its function is as follows. Catalyzes the radical-mediated insertion of two sulfur atoms into the C-6 and C-8 positions of the octanoyl moiety bound to the lipoyl domains of lipoate-dependent enzymes, thereby converting the octanoylated domains into lipoylated derivatives. In Populus trichocarpa (Western balsam poplar), this protein is Lipoyl synthase, mitochondrial.